The primary structure comprises 278 residues: Energy-coupling factor transporter ATP-binding protein EcfA1 (278 aa).

The ABC transporter domain maps to 5–239; the sequence is LLLESVSYQY…QDKLEAAGID (235 aa). 39–46 is an ATP binding site; the sequence is GPNGSGKS.

Belongs to the ABC transporter superfamily. Energy-coupling factor EcfA family. As to quaternary structure, forms a stable energy-coupling factor (ECF) transporter complex composed of 2 membrane-embedded substrate-binding proteins (S component), 2 ATP-binding proteins (A component) and 2 transmembrane proteins (T component).

The protein localises to the cell membrane. In terms of biological role, ATP-binding (A) component of a common energy-coupling factor (ECF) ABC-transporter complex. Unlike classic ABC transporters this ECF transporter provides the energy necessary to transport a number of different substrates. The protein is Energy-coupling factor transporter ATP-binding protein EcfA1 of Halalkalibacterium halodurans (strain ATCC BAA-125 / DSM 18197 / FERM 7344 / JCM 9153 / C-125) (Bacillus halodurans).